Here is a 189-residue protein sequence, read N- to C-terminus: Small ribosomal subunit protein uS7 (189 aa).

This sequence belongs to the universal ribosomal protein uS7 family. In terms of assembly, component of the small ribosomal subunit.

Its subcellular location is the cytoplasm. The sequence is that of Small ribosomal subunit protein uS7 (RPS5) from Encephalitozoon cuniculi (strain GB-M1) (Microsporidian parasite).